Consider the following 367-residue polypeptide: Cellular tumor antigen p53 (367 aa).

The tract at residues 1-30 (MAEEMEPLLEPTEVFMDLWSMLPYSMQQLP) is transcription activation (acidic). Residues 30-84 (PLPEDHSNWQELSPLEPSDPPPPPPPPPLPLAAAAPPPLNPPTPPRAAPSPVVPS) form a disordered region. The span at 46–81 (PSDPPPPPPPPPLPLAAAAPPPLNPPTPPRAAPSPV) shows a compositional bias: pro residues. Residues 87-278 (DYGGDFDFRV…KIEEENFRKR (192 aa)) mediate DNA binding. Zn(2+) is bound by residues Cys-161, His-164, Cys-224, and Cys-228. An interaction with DNA region spans residues 259–266 (RVCACPGR). Disordered stretches follow at residues 275 to 303 (FRKR…KKRV) and 333 to 367 (LAEG…KGSD). A Bipartite nuclear localization signal motif is present at residues 286–302 (KRAMSPPTEAPEPPKKR). The tract at residues 308 to 339 (NEIFYLQVRGRRRYEMLKEINEALQLAEGGSA) is oligomerization. The Nuclear export signal motif lies at 322–333 (EMLKEINEALQL). Residues 347–364 (RVKVEGPQPSCGKKLLQK) form a basic (repression of DNA-binding) region.

It belongs to the p53 family. Binds DNA as a homotetramer. The cofactor is Zn(2+).

It is found in the cytoplasm. The protein localises to the nucleus. Its function is as follows. Multifunctional transcription factor that induces cell cycle arrest, DNA repair or apoptosis upon binding to its target DNA sequence. Acts as a tumor suppressor in many tumor types; induces growth arrest or apoptosis depending on the physiological circumstances and cell type. Negatively regulates cell division by controlling expression of a set of genes required for this process. One of the activated genes is an inhibitor of cyclin-dependent kinases. Apoptosis induction seems to be mediated either by stimulation of BAX and FAS antigen expression, or by repression of Bcl-2 expression. This is Cellular tumor antigen p53 (TP53) from Gallus gallus (Chicken).